Here is a 462-residue protein sequence, read N- to C-terminus: Chromosomal replication initiator protein DnaA (462 aa).

A domain I, interacts with DnaA modulators region spans residues 1–84 (MAVSLWQQCI…RFDIGSRPSA (84 aa)). Residues 84–125 (APRPVQATAAVERPKFEQNTKPAKTSFNVNSPEPAMAANHRS) form a domain II region. A domain III, AAA+ region region spans residues 126–342 (NINRTYQFEN…GALNRVIANA (217 aa)). Residues Gly170, Gly172, Lys173, and Thr174 each coordinate ATP. Residues 343–462 (NFTGRPITID…YANLIRTLSS (120 aa)) are domain IV, binds dsDNA.

The protein belongs to the DnaA family. In terms of assembly, oligomerizes as a right-handed, spiral filament on DNA at oriC.

Its subcellular location is the cytoplasm. Functionally, plays an essential role in the initiation and regulation of chromosomal replication. ATP-DnaA binds to the origin of replication (oriC) to initiate formation of the DNA replication initiation complex once per cell cycle. Binds the DnaA box (a 9 base pair repeat at the origin) and separates the double-stranded (ds)DNA. Forms a right-handed helical filament on oriC DNA; dsDNA binds to the exterior of the filament while single-stranded (ss)DNA is stabiized in the filament's interior. The ATP-DnaA-oriC complex binds and stabilizes one strand of the AT-rich DNA unwinding element (DUE), permitting loading of DNA polymerase. After initiation quickly degrades to an ADP-DnaA complex that is not apt for DNA replication. Binds acidic phospholipids. The protein is Chromosomal replication initiator protein DnaA of Shewanella sediminis (strain HAW-EB3).